A 466-amino-acid chain; its full sequence is Argininosuccinate lyase 1 (466 aa).

This sequence belongs to the lyase 1 family. Argininosuccinate lyase subfamily.

The protein localises to the cytoplasm. The catalysed reaction is 2-(N(omega)-L-arginino)succinate = fumarate + L-arginine. Its pathway is amino-acid biosynthesis; L-arginine biosynthesis; L-arginine from L-ornithine and carbamoyl phosphate: step 3/3. This chain is Argininosuccinate lyase 1, found in Agrobacterium fabrum (strain C58 / ATCC 33970) (Agrobacterium tumefaciens (strain C58)).